Reading from the N-terminus, the 1282-residue chain is Trafficking protein particle complex subunit 8 (1282 aa).

The interval 245-287 (TDAIAPGPNGASNQQSPSSPTSSVATISSTMPAVGSVSPNSHP) is disordered. A compositionally biased stretch (low complexity) spans 255–273 (ASNQQSPSSPTSSVATISS).

Functionally, plays a role in endoplasmic reticulum to Golgi apparatus trafficking at a very early stage. Involved in collagen secretion. The protein is Trafficking protein particle complex subunit 8 of Caenorhabditis elegans.